A 264-amino-acid chain; its full sequence is S-adenosylmethionine decarboxylase proenzyme (264 aa).

Catalysis depends on S113, which acts as the Schiff-base intermediate with substrate; via pyruvic acid. A Pyruvic acid (Ser); by autocatalysis modification is found at S113. Residue H118 is the Proton acceptor; for processing activity of the active site. Catalysis depends on C141, which acts as the Proton donor; for catalytic activity.

It belongs to the prokaryotic AdoMetDC family. Type 2 subfamily. As to quaternary structure, heterooctamer of four alpha and four beta chains arranged as a tetramer of alpha/beta heterodimers. It depends on pyruvate as a cofactor. In terms of processing, is synthesized initially as an inactive proenzyme. Formation of the active enzyme involves a self-maturation process in which the active site pyruvoyl group is generated from an internal serine residue via an autocatalytic post-translational modification. Two non-identical subunits are generated from the proenzyme in this reaction, and the pyruvate is formed at the N-terminus of the alpha chain, which is derived from the carboxyl end of the proenzyme. The post-translation cleavage follows an unusual pathway, termed non-hydrolytic serinolysis, in which the side chain hydroxyl group of the serine supplies its oxygen atom to form the C-terminus of the beta chain, while the remainder of the serine residue undergoes an oxidative deamination to produce ammonia and the pyruvoyl group blocking the N-terminus of the alpha chain.

It carries out the reaction S-adenosyl-L-methionine + H(+) = S-adenosyl 3-(methylsulfanyl)propylamine + CO2. The protein operates within amine and polyamine biosynthesis; S-adenosylmethioninamine biosynthesis; S-adenosylmethioninamine from S-adenosyl-L-methionine: step 1/1. Its function is as follows. Catalyzes the decarboxylation of S-adenosylmethionine to S-adenosylmethioninamine (dcAdoMet), the propylamine donor required for the synthesis of the polyamines spermine and spermidine from the diamine putrescine. The sequence is that of S-adenosylmethionine decarboxylase proenzyme from Stenotrophomonas maltophilia (strain R551-3).